The primary structure comprises 243 residues: 1-(5-phosphoribosyl)-5-[(5-phosphoribosylamino)methylideneamino] imidazole-4-carboxamide isomerase (243 aa).

Asp-8 serves as the catalytic Proton acceptor. The active-site Proton donor is the Asp-129.

It belongs to the HisA/HisF family.

The protein resides in the cytoplasm. The enzyme catalyses 1-(5-phospho-beta-D-ribosyl)-5-[(5-phospho-beta-D-ribosylamino)methylideneamino]imidazole-4-carboxamide = 5-[(5-phospho-1-deoxy-D-ribulos-1-ylimino)methylamino]-1-(5-phospho-beta-D-ribosyl)imidazole-4-carboxamide. Its pathway is amino-acid biosynthesis; L-histidine biosynthesis; L-histidine from 5-phospho-alpha-D-ribose 1-diphosphate: step 4/9. In Citrifermentans bemidjiense (strain ATCC BAA-1014 / DSM 16622 / JCM 12645 / Bem) (Geobacter bemidjiensis), this protein is 1-(5-phosphoribosyl)-5-[(5-phosphoribosylamino)methylideneamino] imidazole-4-carboxamide isomerase.